The following is a 404-amino-acid chain: Cysteine desulfurase IscS (404 aa).

Residues 75–76, Asn-155, Gln-183, and 203–205 contribute to the pyridoxal 5'-phosphate site; these read AT and SSH. The residue at position 206 (Lys-206) is an N6-(pyridoxal phosphate)lysine. Thr-243 provides a ligand contact to pyridoxal 5'-phosphate. The active-site Cysteine persulfide intermediate is Cys-328. Cys-328 serves as a coordination point for [2Fe-2S] cluster.

It belongs to the class-V pyridoxal-phosphate-dependent aminotransferase family. NifS/IscS subfamily. Homodimer. Forms a heterotetramer with IscU, interacts with other sulfur acceptors. The cofactor is pyridoxal 5'-phosphate.

Its subcellular location is the cytoplasm. It carries out the reaction (sulfur carrier)-H + L-cysteine = (sulfur carrier)-SH + L-alanine. It functions in the pathway cofactor biosynthesis; iron-sulfur cluster biosynthesis. Its function is as follows. Master enzyme that delivers sulfur to a number of partners involved in Fe-S cluster assembly, tRNA modification or cofactor biosynthesis. Catalyzes the removal of elemental sulfur atoms from cysteine to produce alanine. Functions as a sulfur delivery protein for Fe-S cluster synthesis onto IscU, an Fe-S scaffold assembly protein, as well as other S acceptor proteins. In Histophilus somni (strain 129Pt) (Haemophilus somnus), this protein is Cysteine desulfurase IscS.